Reading from the N-terminus, the 540-residue chain is Sensory neuron membrane protein 1 (540 aa).

The Cytoplasmic portion of the chain corresponds to 1-105 (MRTDDPVIGN…WIFRPDLSKP (105 aa)). A helical membrane pass occupies residues 106–126 (LTGDEMITIPHPLILGALLMV). Residues 127–436 (QRDREAMMPL…YTLFLGLRFN (310 aa)) are Extracellular-facing. N-linked (GlcNAc...) asparagine glycans are attached at residues N193 and N206. 3 disulfides stabilise this stretch: C245–C310, C274–C330, and C312–C319. N418 is a glycosylation site (N-linked (GlcNAc...) asparagine). A helical membrane pass occupies residues 437–457 (TAVKWLTIIIGTIGTIVGGFM). Residues 458 to 540 (HYKRTTKMVN…VTVTEMQERY (83 aa)) lie on the Cytoplasmic side of the membrane.

This sequence belongs to the CD36 family.

Its subcellular location is the cell membrane. Plays an olfactory role that is not restricted to pheromone sensitivity. This is Sensory neuron membrane protein 1 from Aedes aegypti (Yellowfever mosquito).